Consider the following 298-residue polypeptide: MSDSEGGVEVSSPRLLIVTGMSGAGKTQAVQSLEDLGYFCVDNLPPALIPKFAELVSQSNGKVEKVALVVDIRGGAFFHQAIEVLHDLGEQGYRFEVLFLEASDETLVRRYKESRRRHPLDNHGEVLKVIQEERELLREIRGRATKVIDTSNVSNNQLKEQIITQYGGDKENSNRLLITVISFGYKYGIPMDSDLVLDVRFLPNPYYIPELRCLTGNDEPVQQHVMSQDVTKEFMEKLIDFVQFLVPHYQREGKATLMIAIGCTGGMHRSVTLTNKLGEVLSEKGYRVNVRHRDIMRV.

20–27 (GMSGAGKT) contributes to the ATP binding site. 71-74 (DIRG) contributes to the GTP binding site.

This sequence belongs to the RapZ-like family.

In terms of biological role, displays ATPase and GTPase activities. This is Nucleotide-binding protein Dred_3054 from Desulforamulus reducens (strain ATCC BAA-1160 / DSM 100696 / MI-1) (Desulfotomaculum reducens).